An 845-amino-acid chain; its full sequence is Beta-mannosidase B (845 aa).

Asn252 carries an N-linked (GlcNAc...) asparagine glycan. Catalysis depends on Glu432, which acts as the Proton donor. 2 N-linked (GlcNAc...) asparagine glycosylation sites follow: Asn717 and Asn723.

The protein belongs to the glycosyl hydrolase 2 family. Beta-mannosidase B subfamily.

It carries out the reaction Hydrolysis of terminal, non-reducing beta-D-mannose residues in beta-D-mannosides.. The protein operates within glycan metabolism; N-glycan degradation. Exoglycosidase that cleaves the single beta-linked mannose residue from the non-reducing end of beta-mannosidic oligosaccharides of various complexity and length. Prefers mannobiose over mannotriose and has no activity against polymeric mannan. Is also severely restricted by galactosyl substitutions at the +1 subsite. The protein is Beta-mannosidase B (mndB) of Aspergillus fumigatus (strain ATCC MYA-4609 / CBS 101355 / FGSC A1100 / Af293) (Neosartorya fumigata).